The primary structure comprises 441 residues: MTPEGLMKMQAVSVGLLLFSMTWAAPMPNEDRSSCGNQDSIHKDLAASVYPDPTVDEGTEDGQGALLHPPGQDRYGAALLRNITQPVKSLVTGAELRREGNQEKRPQSVLSVIPADVNDAKVSLKDIKNQESYLLTQSSPVKSKHTKHTRQTRRSTHYLTHLPQIKKTPSDLEGSGSPDLLVRGDNDVPPFSGDGQHFMHIPGKGGAGSGPESSTSRPLSGSSKAEVIDPHMSGLGSNEIPGREGHGGSAYATRDKAAQGAGSAGGSLVGGSNEITGSTNFRELPGKEGNRINAGSQNAHQGKVEFHYPQVASREKVKGGVEHAGRAGYNEIPKSSKGSSSKDAEESKGNQLTLTASQRFPGKGKSQGPALPSHSLSNEVKSEENHYVFHGQNNLTPNKGMSQRRGSWPSRRPNSHRRASTRQRDSSESSSSGSSSESHGD.

The signal sequence occupies residues 1 to 24; that stretch reads MTPEGLMKMQAVSVGLLLFSMTWA. N-linked (GlcNAc...) asparagine glycosylation occurs at N82. The tract at residues 137–441 is disordered; sequence QSSPVKSKHT…SGSSSESHGD (305 aa). A compositionally biased stretch (basic residues) spans 142 to 156; sequence KSKHTKHTRQTRRST. The tract at residues 178–200 is dentonin; sequence PDLLVRGDNDVPPFSGDGQHFMH. Positions 183-185 match the Cell attachment site motif; the sequence is RGD. S192 carries an O-linked (Xyl...) (chondroitin sulfate) serine glycan. Residues 211 to 223 show a composition bias toward polar residues; it reads PESSTSRPLSGSS. The span at 313–325 shows a compositional bias: basic and acidic residues; it reads SREKVKGGVEHAG. 2 stretches are compositionally biased toward polar residues: residues 349–358 and 391–405; these read GNQLTLTASQ and GQNNLTPNKGMSQRR. An ASARM motif; interaction with PHEX region spans residues 424-441; sequence RDSSESSSSGSSSESHGD. Residues 428–441 are compositionally biased toward low complexity; the sequence is ESSSSGSSSESHGD.

This sequence belongs to the PF07175/osteoregulin family. Interacts (via ASARM motif) with PHEX; the interaction is zinc-dependent. Phosphorylated on serine residues in the ASARM motif; the phosphorylation is important for the inhibition of bone mineralization. In terms of processing, cleaved by CTSB/cathepsin B; the cleavage is blocked by metalloprotease PHEX. Expressed in osteocytes (at protein level). Expressed by chondrocytes, specifically in the hypertrophic zone of the bone growth plate (at protein level). Expressed in osteoblasts in bone (at protein level). Expressed by osteoblasts within the metaphysis (at protein level). Expressed at low levels in white fat, brown fat, testes, brain and aorta. Expressed in the craniofacial complex (at protein level). Expressed in odontoblasts, ameloblasts and in predentin during tooth development (at protein level). Expressed in the kidney (at protein level). Expressed in osteocytes in mandibular condylar cartilage and tibial cartilage (at protein level). Expressed in salivary glands.

It is found in the secreted. The protein localises to the extracellular space. It localises to the extracellular matrix. Regulates renal phosphate and uric acid excretion. Regulates bone mineralization by osteoblasts and cartilage mineralization by chondrocytes. Regulates the mineralization of the extracellular matrix of the craniofacial complex, such as teeth, bone and cartilage. Increases dental pulp stem cell proliferation. This Mus musculus (Mouse) protein is Matrix extracellular phosphoglycoprotein.